A 100-amino-acid polypeptide reads, in one-letter code: MTRRCDITGKSVLSGNNVSHANNKSRRRFLPNLQDSALQSDALGHSVKLRVTPRGLATIEQKGGLDAFLLDTPNRKLTDEARTLKRRVAKAAARREAKSA.

The tract at residues 1-25 is disordered; it reads MTRRCDITGKSVLSGNNVSHANNKS. A compositionally biased stretch (polar residues) spans 11–22; that stretch reads SVLSGNNVSHAN.

The protein belongs to the bacterial ribosomal protein bL28 family.

This chain is Large ribosomal subunit protein bL28, found in Acidiphilium cryptum (strain JF-5).